We begin with the raw amino-acid sequence, 587 residues long: Putative ankyrin repeat protein L66 (587 aa).

16 ANK repeats span residues D77–I106, N108–D136, Y137–C166, D168–Y196, N199–F228, D230–N256, N259–N288, F302–F331, D333–I360, N361–D390, T392–K418, H420–S448, I449–S478, K480–N507, Y509–C537, and R539–C567.

The chain is Putative ankyrin repeat protein L66 from Acanthamoeba polyphaga mimivirus (APMV).